Here is a 454-residue protein sequence, read N- to C-terminus: tRNA modification GTPase MnmE (454 aa).

(6S)-5-formyl-5,6,7,8-tetrahydrofolate is bound by residues Arg-23, Glu-80, and Lys-120. The 162-residue stretch at 216–377 folds into the TrmE-type G domain; the sequence is GMKVVIAGRP…LRNHLKQSMG (162 aa). Residue Asn-226 coordinates K(+). GTP is bound by residues 226 to 231, 245 to 251, 270 to 273, 335 to 338, and 358 to 360; these read NAGKSS, TDIAGTT, DTAG, NKAD, and SAR. Ser-230 contributes to the Mg(2+) binding site. Residues Thr-245, Ile-247, and Thr-250 each coordinate K(+). Residue Thr-251 coordinates Mg(2+). Lys-454 serves as a coordination point for (6S)-5-formyl-5,6,7,8-tetrahydrofolate.

It belongs to the TRAFAC class TrmE-Era-EngA-EngB-Septin-like GTPase superfamily. TrmE GTPase family. As to quaternary structure, homodimer. Heterotetramer of two MnmE and two MnmG subunits. K(+) serves as cofactor.

It localises to the cytoplasm. In terms of biological role, exhibits a very high intrinsic GTPase hydrolysis rate. Involved in the addition of a carboxymethylaminomethyl (cmnm) group at the wobble position (U34) of certain tRNAs, forming tRNA-cmnm(5)s(2)U34. The sequence is that of tRNA modification GTPase MnmE from Yersinia enterocolitica serotype O:8 / biotype 1B (strain NCTC 13174 / 8081).